We begin with the raw amino-acid sequence, 212 residues long: UDP-N-acetylglucosamine transferase subunit ALG13 (212 aa).

This sequence belongs to the glycosyltransferase 28 family. As to quaternary structure, heterodimer with ALG14 to form a functional enzyme.

The protein resides in the endoplasmic reticulum. It catalyses the reaction an N-acetyl-alpha-D-glucosaminyl-diphospho-di-trans,poly-cis-dolichol + UDP-N-acetyl-alpha-D-glucosamine = an N,N'-diacetylchitobiosyl-diphospho-di-trans,poly-cis-dolichol + UDP + H(+). Its function is as follows. Involved in protein N-glycosylation. Essential for the second step of the dolichol-linked oligosaccharide pathway. This is UDP-N-acetylglucosamine transferase subunit ALG13 (ALG13) from Debaryomyces hansenii (strain ATCC 36239 / CBS 767 / BCRC 21394 / JCM 1990 / NBRC 0083 / IGC 2968) (Yeast).